The primary structure comprises 555 residues: Chaperonin GroEL (555 aa).

Residues 29–32, Lys-50, 86–90, Gly-418, and Asp-499 each bind ATP; these read TLGP and DGTTT. A disordered region spans residues 528 to 555; the sequence is HEEDNNTGNRSGGGVGGGHHGGMGGMDF. A compositionally biased stretch (gly residues) spans 537 to 555; it reads RSGGGVGGGHHGGMGGMDF.

It belongs to the chaperonin (HSP60) family. Forms a cylinder of 14 subunits composed of two heptameric rings stacked back-to-back. Interacts with the co-chaperonin GroES.

It is found in the cytoplasm. The catalysed reaction is ATP + H2O + a folded polypeptide = ADP + phosphate + an unfolded polypeptide.. Together with its co-chaperonin GroES, plays an essential role in assisting protein folding. The GroEL-GroES system forms a nano-cage that allows encapsulation of the non-native substrate proteins and provides a physical environment optimized to promote and accelerate protein folding. This Orientia tsutsugamushi (strain Ikeda) (Rickettsia tsutsugamushi) protein is Chaperonin GroEL.